Reading from the N-terminus, the 146-residue chain is Putative serine protease inhibitor SAV_2156 (146 aa).

A signal peptide spans 1–26; that stretch reads MTKTTMAVPGALLAAIALLSAAPAQA. 2 disulfide bridges follow: C57–C70 and C90–C120.

Belongs to the protease inhibitor I16 (SSI) family.

It localises to the secreted. In Streptomyces avermitilis (strain ATCC 31267 / DSM 46492 / JCM 5070 / NBRC 14893 / NCIMB 12804 / NRRL 8165 / MA-4680), this protein is Putative serine protease inhibitor SAV_2156.